Consider the following 382-residue polypeptide: ORC1-type DNA replication protein 1 (382 aa).

Residues 63 to 67, Y205, and R217 each bind ATP; that span reads TGKTA.

Belongs to the CDC6/cdc18 family. In terms of assembly, monomer. Interacts with MCM via the WH domain. In terms of processing, autophosphorylated on a serine. Phosphorylation is stimulated by binding to MCM. Both single-stranded DNA and double-stranded DNA inhibit the phosphorylation reaction.

Involved in regulation of DNA replication. May play an essential role in origin recognition. Binds to DNA, with a preference for origin-specific double-stranded sequences. Does not bind single-stranded DNA. Inhibits MCM helicase activity but does not affect its oligomeric state. This chain is ORC1-type DNA replication protein 1 (cdc6-1), found in Methanothermobacter thermautotrophicus (strain ATCC 29096 / DSM 1053 / JCM 10044 / NBRC 100330 / Delta H) (Methanobacterium thermoautotrophicum).